Consider the following 239-residue polypeptide: NADH-quinone oxidoreductase subunit I 1 (239 aa).

4Fe-4S ferredoxin-type domains are found at residues 81–111 and 123–152; these read LVPR…IEAA and AKFV…MDSG. [4Fe-4S] cluster-binding residues include cysteine 91, cysteine 94, cysteine 97, cysteine 101, cysteine 132, cysteine 135, cysteine 138, and cysteine 142.

It belongs to the complex I 23 kDa subunit family. In terms of assembly, NDH-1 is composed of 14 different subunits. Subunits NuoA, H, J, K, L, M, N constitute the membrane sector of the complex. [4Fe-4S] cluster is required as a cofactor.

It is found in the cell inner membrane. The catalysed reaction is a quinone + NADH + 5 H(+)(in) = a quinol + NAD(+) + 4 H(+)(out). Its function is as follows. NDH-1 shuttles electrons from NADH, via FMN and iron-sulfur (Fe-S) centers, to quinones in the respiratory chain. The immediate electron acceptor for the enzyme in this species is believed to be ubiquinone. Couples the redox reaction to proton translocation (for every two electrons transferred, four hydrogen ions are translocated across the cytoplasmic membrane), and thus conserves the redox energy in a proton gradient. This chain is NADH-quinone oxidoreductase subunit I 1, found in Anaeromyxobacter dehalogenans (strain 2CP-C).